Here is a 395-residue protein sequence, read N- to C-terminus: Acid ceramidase (395 aa).

An N-terminal signal peptide occupies residues 1 to 21 (MPGRSCVALVLLAAAVSCAVA). An intrachain disulfide couples C31 to C340. The Nucleophile role is filled by C143. Residues N173, N195, N259, N286, N342, and N348 are each glycosylated (N-linked (GlcNAc...) asparagine). C388 and C392 form a disulfide bridge.

It belongs to the acid ceramidase family. Heterodimer; disulfide-linked. The heterodimer is composed of the disulfide-linked alpha and beta chains produced by autocatalytic cleavage of the precursor. Isoform 2: May interact with NR5A1 in the nucleus; the direct interaction would negatively regulate NR5A1 transcriptional activity. N-glycosylated. Post-translationally, proteolytically cleaved into two chains alpha and beta that remain associated via a disulfide bond. Cleavage gives rise to a conformation change that activates the enzyme. The same catalytic Cys residue mediates the autoproteolytic cleavage and subsequent hydrolysis of lipid substrates. The beta chain may undergo an additional C-terminal processing. Broadly expressed with higher expression in heart.

The protein localises to the lysosome. It is found in the secreted. It localises to the nucleus. The protein resides in the cytoplasm. The catalysed reaction is an N-acylsphing-4-enine + H2O = sphing-4-enine + a fatty acid. It catalyses the reaction a beta-D-glucosyl-(1&lt;-&gt;1')-N-acylsphing-4-enine + H2O = beta-D-glucosyl-(1&lt;-&gt;1)-sphing-4-enine + a fatty acid. The enzyme catalyses a globoside Gb3Cer + H2O = a lysoGb3 + a fatty acid. It carries out the reaction a globoside Gb3Cer (d18:1(4E)) + H2O = a lysoGb3(d18:1(4E)) + a fatty acid. The catalysed reaction is N-dodecanoylsphing-4-enine + H2O = dodecanoate + sphing-4-enine. It catalyses the reaction N-tetradecanoylsphing-4-enine + H2O = tetradecanoate + sphing-4-enine. The enzyme catalyses N-hexadecanoylsphing-4-enine + H2O = sphing-4-enine + hexadecanoate. It carries out the reaction N-octadecanoylsphing-4-enine + H2O = sphing-4-enine + octadecanoate. The catalysed reaction is N-dodecanoyl-(4R)-hydroxysphinganine + H2O = (4R)-hydroxysphinganine + dodecanoate. It catalyses the reaction N-(dodecanoyl)-sphinganine + H2O = dodecanoate + sphinganine. The enzyme catalyses N-(acetyl)-sphing-4-enine + H2O = sphing-4-enine + acetate. It carries out the reaction N-(hexanoyl)sphing-4-enine + H2O = hexanoate + sphing-4-enine. The catalysed reaction is N-octanoylsphing-4-enine + H2O = octanoate + sphing-4-enine. It catalyses the reaction N-(9Z-octadecenoyl)-sphing-4-enine + H2O = sphing-4-enine + (9Z)-octadecenoate. The enzyme catalyses N-dodecanoylethanolamine + H2O = dodecanoate + ethanolamine. It functions in the pathway lipid metabolism; sphingolipid metabolism. With respect to regulation, activated by Ca(2+), Mg(2+) and Na(+) cations. Inhibited by Zn(2+). Phosphatidylserine and phosphatidic acid stimulate while cardiolipin, phosphatidylcholine, lysophosphatidylcholine, phosphatidylethanolamine, phosphatidylinositol and sphingomyelin inhibit the reverse ceramide synthase activity. Phosphatidic acid, phosphatidylinositol and C16-ceramide inhibit the ceramidase/hydrolase activity. In terms of biological role, lysosomal ceramidase that hydrolyzes sphingolipid ceramides into sphingosine and free fatty acids at acidic pH. Ceramides, sphingosine, and its phosphorylated form sphingosine-1-phosphate are bioactive lipids that mediate cellular signaling pathways regulating several biological processes including cell proliferation, apoptosis and differentiation. Has a higher catalytic efficiency towards C12-ceramides versus other ceramides. Also catalyzes the reverse reaction allowing the synthesis of ceramides from fatty acids and sphingosine. For the reverse synthetic reaction, the natural sphingosine D-erythro isomer is more efficiently utilized as a substrate compared to D-erythro-dihydrosphingosine and D-erythro-phytosphingosine, while the fatty acids with chain lengths of 12 or 14 carbons are the most efficiently used. Also has an N-acylethanolamine hydrolase activity. By regulating the levels of ceramides, sphingosine and sphingosine-1-phosphate in the epidermis, mediates the calcium-induced differentiation of epidermal keratinocytes. Also indirectly regulates tumor necrosis factor/TNF-induced apoptosis. By regulating the intracellular balance between ceramides and sphingosine, in adrenocortical cells, probably also acts as a regulator of steroidogenesis. Functionally, may directly regulate steroidogenesis by binding the nuclear receptor NR5A1 and negatively regulating its transcriptional activity. The protein is Acid ceramidase of Homo sapiens (Human).